The following is a 395-amino-acid chain: Argininosuccinate synthase (395 aa).

Residues A9–S17 and A37 each bind ATP. Positions 87 and 92 each coordinate L-citrulline. Residue G117 participates in ATP binding. Residues T119, N123, and D124 each coordinate L-aspartate. An L-citrulline-binding site is contributed by N123. L-citrulline-binding residues include R127, S173, S182, E258, and Y270.

The protein belongs to the argininosuccinate synthase family. Type 1 subfamily. Homotetramer.

It localises to the cytoplasm. The enzyme catalyses L-citrulline + L-aspartate + ATP = 2-(N(omega)-L-arginino)succinate + AMP + diphosphate + H(+). Its pathway is amino-acid biosynthesis; L-arginine biosynthesis; L-arginine from L-ornithine and carbamoyl phosphate: step 2/3. This is Argininosuccinate synthase from Methanospirillum hungatei JF-1 (strain ATCC 27890 / DSM 864 / NBRC 100397 / JF-1).